We begin with the raw amino-acid sequence, 142 residues long: Relaxin-3 (142 aa).

An N-terminal signal peptide occupies residues 1-25; it reads MARYKLLLLLAVWVLTGELWPGAEA. Intrachain disulfides connect Cys35-Cys129, Cys47-Cys142, and Cys128-Cys133. The propeptide at 55-118 is connecting peptide; it reads SDILAHEAMG…GTPGALRGSR (64 aa).

It belongs to the insulin family. As to quaternary structure, heterodimer of a B chain and an A chain linked by two disulfide bonds.

The protein localises to the secreted. Its function is as follows. May play a role in neuropeptide signaling processes. Ligand for LGR7, RXFP3 and RXFP4. This is Relaxin-3 (RLN3) from Pan troglodytes (Chimpanzee).